The following is a 164-amino-acid chain: N5-carboxyaminoimidazole ribonucleotide mutase (164 aa).

Positions 13, 16, and 43 each coordinate substrate.

Belongs to the AIR carboxylase family. Class I subfamily.

It carries out the reaction 5-carboxyamino-1-(5-phospho-D-ribosyl)imidazole + H(+) = 5-amino-1-(5-phospho-D-ribosyl)imidazole-4-carboxylate. It functions in the pathway purine metabolism; IMP biosynthesis via de novo pathway; 5-amino-1-(5-phospho-D-ribosyl)imidazole-4-carboxylate from 5-amino-1-(5-phospho-D-ribosyl)imidazole (N5-CAIR route): step 2/2. Catalyzes the conversion of N5-carboxyaminoimidazole ribonucleotide (N5-CAIR) to 4-carboxy-5-aminoimidazole ribonucleotide (CAIR). The protein is N5-carboxyaminoimidazole ribonucleotide mutase of Haemophilus influenzae (strain ATCC 51907 / DSM 11121 / KW20 / Rd).